A 93-amino-acid polypeptide reads, in one-letter code: Small ribosomal subunit protein uS19 (93 aa).

Positions glutamate 73–lysine 93 are disordered. Residues tyrosine 80 to lysine 93 show a composition bias toward basic residues.

It belongs to the universal ribosomal protein uS19 family.

Protein S19 forms a complex with S13 that binds strongly to the 16S ribosomal RNA. The polypeptide is Small ribosomal subunit protein uS19 (rpsS) (Aster yellows phytoplasma).